The following is a 373-amino-acid chain: Glutamine synthetase (373 aa).

Position 2 is an N-acetylalanine (Ala2). The required for glutamine-induced ubiquitination by CRL4(CRBN) and proteasomal degradation stretch occupies residues 2–25 (ATSASSHLNKGIKQVYMSLPQGEK). Residues Lys11 and Lys14 each carry the N6-acetyllysine modification. Positions 24–106 (EKVQAMYIWI…VFCEVFKYNR (83 aa)) constitute a GS beta-grasp domain. Residue Tyr104 is modified to Phosphotyrosine. The 261-residue stretch at 113 to 373 (LRHTCKRIMD…TGDEPFQYKN (261 aa)) folds into the GS catalytic domain. ATP is bound at residue Glu134. The Mn(2+) site is built by Glu134, Glu136, Glu196, and Glu203. 203 to 208 (EFQIGP) is an ATP binding site. 246 to 247 (NW) contributes to the L-glutamate binding site. A Mn(2+)-binding site is contributed by His253. ATP contacts are provided by residues 255–257 (NFS), Arg319, and Arg324. Residue Arg319 coordinates L-glutamate. Residue 336–338 (YFE) participates in ADP binding. Glu338 is a binding site for Mn(2+). Arg340 contacts L-glutamate. Position 343 is a phosphoserine (Ser343).

This sequence belongs to the glutamine synthetase family. In terms of assembly, decamer; composed of two pentamers. Interacts with PALMD. Interacts with RHOJ. Interacts with BEST2; this interaction tethers a fraction of GLUL to the membrane, causing a decrease of cytosolic glutamine synthase (GS) activity and inhibits the chloride channel activity of BEST2 by affecting the gating at the aperture in the absence of intracellular glutamate. It depends on Mg(2+) as a cofactor. Mn(2+) is required as a cofactor. Post-translationally, palmitoylated; undergoes autopalmitoylation. Acetylated by EP300/p300; acetylation is stimulated by increased glutamine levels and promotes ubiquitin-mediated proteasomal degradation. In terms of processing, ubiquitinated by ZNRF1. Ubiquitinated by the DCX (DDB1-CUL4-X-box) E3 ubiquitin-protein ligase complex called CRL4(CRBN), leading to proteasomal degradation.

The protein resides in the cytoplasm. The protein localises to the cytosol. It localises to the microsome. It is found in the mitochondrion. Its subcellular location is the cell membrane. The enzyme catalyses L-glutamate + NH4(+) + ATP = L-glutamine + ADP + phosphate + H(+). The catalysed reaction is L-cysteinyl-[protein] + hexadecanoyl-CoA = S-hexadecanoyl-L-cysteinyl-[protein] + CoA. With respect to regulation, glutamine synthetase activity is inhibited by methionine sulfoximine (MSO). In terms of biological role, glutamine synthetase that catalyzes the ATP-dependent conversion of glutamate and ammonia to glutamine. Its role depends on tissue localization: in the brain, it regulates the levels of toxic ammonia and converts neurotoxic glutamate to harmless glutamine, whereas in the liver, it is one of the enzymes responsible for the removal of ammonia. Plays a key role in ammonium detoxification during erythropoiesis: the glutamine synthetase activity is required to remove ammonium generated by porphobilinogen deaminase (HMBS) during heme biosynthesis to prevent ammonium accumulation and oxidative stress. Essential for proliferation of fetal skin fibroblasts. Independently of its glutamine synthetase activity, required for endothelial cell migration during vascular development. Involved in angiogenesis by regulating membrane localization and activation of the GTPase RHOJ, possibly by promoting RHOJ palmitoylation. May act as a palmitoyltransferase for RHOJ: able to autopalmitoylate and then transfer the palmitoyl group to RHOJ. Plays a role in ribosomal 40S subunit biogenesis. Through the interaction with BEST2, inhibits BEST2 channel activity by affecting the gating at the aperture in the absence of intracellular L-glutamate, but sensitizes BEST2 to intracellular L-glutamate, which promotes the opening of BEST2 and thus relieves its inhibitory effect on BEST2. This Canis lupus familiaris (Dog) protein is Glutamine synthetase.